Consider the following 356-residue polypeptide: Tyrosine recombinase XerS (356 aa).

The 106-residue stretch at 16–121 folds into the Core-binding (CB) domain; the sequence is IMPWYVLDYY…ALSSLYKYLT (106 aa). The Tyr recombinase domain maps to 169 to 354; sequence AFLDYVDKEY…VNDEQKNALD (186 aa). Residues R210, K234, H306, R309, and H332 contribute to the active site. Y341 functions as the O-(3'-phospho-DNA)-tyrosine intermediate in the catalytic mechanism.

The protein belongs to the 'phage' integrase family. XerS subfamily.

Its subcellular location is the cytoplasm. Its activity is regulated as follows. FtsK is required for recombination. Site-specific tyrosine recombinase, which acts by catalyzing the cutting and rejoining of the recombining DNA molecules. Essential to convert dimers of the bacterial chromosome into monomers to permit their segregation at cell division. The polypeptide is Tyrosine recombinase XerS (Streptococcus pyogenes serotype M1).